The chain runs to 149 residues: UPF0208 membrane protein PBPRA2797 (149 aa).

Transmembrane regions (helical) follow at residues 41–60 (FATR…QMAF) and 65–87 (ALPQ…LWWL).

Belongs to the UPF0208 family.

Its subcellular location is the cell inner membrane. This is UPF0208 membrane protein PBPRA2797 from Photobacterium profundum (strain SS9).